Here is a 102-residue protein sequence, read N- to C-terminus: Aspartyl/glutamyl-tRNA(Asn/Gln) amidotransferase subunit C (102 aa).

Belongs to the GatC family. Heterotrimer of A, B and C subunits.

It carries out the reaction L-glutamyl-tRNA(Gln) + L-glutamine + ATP + H2O = L-glutaminyl-tRNA(Gln) + L-glutamate + ADP + phosphate + H(+). The enzyme catalyses L-aspartyl-tRNA(Asn) + L-glutamine + ATP + H2O = L-asparaginyl-tRNA(Asn) + L-glutamate + ADP + phosphate + 2 H(+). Its function is as follows. Allows the formation of correctly charged Asn-tRNA(Asn) or Gln-tRNA(Gln) through the transamidation of misacylated Asp-tRNA(Asn) or Glu-tRNA(Gln) in organisms which lack either or both of asparaginyl-tRNA or glutaminyl-tRNA synthetases. The reaction takes place in the presence of glutamine and ATP through an activated phospho-Asp-tRNA(Asn) or phospho-Glu-tRNA(Gln). This is Aspartyl/glutamyl-tRNA(Asn/Gln) amidotransferase subunit C from Bordetella avium (strain 197N).